The sequence spans 738 residues: MRRSLAPSQVAKRKQGPDSDDEEDWEPDMEPQCKRDCREKYISPYRKPLTPLTNRPFCADGNEHEAFIRKILSKPFKIPIPNYTGVLGLRALGLRRAGVRKALHDPFEDGALVLYEPPVISAHDLIKADKEKLPVHVVVDPVLSKVLRPHQREGVKFLWDCVTGRRIENSYGCIMADEMGLGKTLQCITLIWTLLKQSPDCKPEIDKVIVVSPSSLVRNWYNEVGKWLGGRVQPVAIDGGSKDEIDSKLVNFISQQGMRIPTPILIISYETFRLHAEVLHKGKVGLVICDEGHRLKNSDNQTYLALNSMNAQRRVLISGTPIQNDLLEYFSLVHFVNSGILGTAQEFKKRFEIPILKGRDADASDKDRAAGEQKLQELISIVNRCLIRRTSDILSKYLPVKIEQVVCCNLTPLQKELYKLFLKQAKPVESLQTGKISVSSLSSITSLKKLCNHPALIYEKCLTGEEGFDGALDLFPQNYSTKAVEPQLSGKMLVLDYILAMTRTTTSDKVVLVSNYTQTLDLFEKLCRNRRYLYVRLDGTMSIKKRAKIVERFNNPSSPEFIFMLSSKAGGCGLNLIGANRLVMFDPDWNPANDEQAMARVWRDGQKKTCYIYRLLSTGTIEEKILQRQAHKKALSSCVVDEEQDVERHFSLGELRELFSLNEKTLSDTHDRFRCRRCVNGRQVRPPPDDSDCTCDLSNWHHCADKRGLRDPVLQASWDAAVSFVFHQRSHEDQRGVV.

Positions 1–31 are disordered; the sequence is MRRSLAPSQVAKRKQGPDSDDEEDWEPDMEP. Residues 18–29 are compositionally biased toward acidic residues; sequence DSDDEEDWEPDM. One can recognise a Helicase ATP-binding domain in the interval 164–339; the sequence is GRRIENSYGC…FSLVHFVNSG (176 aa). 177-184 contacts ATP; that stretch reads DEMGLGKT. The short motif at 290 to 293 is the DEAH box element; sequence DEGH. The Helicase C-terminal domain occupies 493-647; that stretch reads LVLDYILAMT…CVVDEEQDVE (155 aa). Phosphoserine occurs at positions 566 and 567.

Homohexamer. Interacts with RAD51. Phosphorylated. Phosphorylations at Ser-566 and Ser-567 allow efficient removal of RAD51 filaments from DNA.

The catalysed reaction is ATP + H2O = ADP + phosphate + H(+). Functionally, plays an essential role in homologous recombination (HR) which is a major pathway for repairing DNA double-strand breaks (DSBs), single-stranded DNA (ssDNA) gaps, and stalled or collapsed replication forks. Acts as a molecular motor during the homology search and guides RAD51 ssDNA along a donor dsDNA thereby changing the homology search from the diffusion-based mechanism to a motor-guided mechanism. Also plays an essential role in RAD51-mediated synaptic complex formation which consists of three strands encased in a protein filament formed once homology is recognized. Once DNA strand exchange occured, dissociates RAD51 from nucleoprotein filaments formed on dsDNA. The chain is DNA repair and recombination protein RAD54-like (rad54l) from Danio rerio (Zebrafish).